Consider the following 120-residue polypeptide: U3-hexatoxin-Hi1a (120 aa).

An N-terminal signal peptide occupies residues 1-19 (MKLLYFFVVITVLVAVAAA). The propeptide occupies 20 to 51 (LPAKTEEQIAAEENQLVEDLVQYAGTRLTRKR).

It belongs to the neurotoxin 25 family. F7 subfamily. Post-translationally, contains 4 disulfide bonds. Expressed by the venom gland.

The protein resides in the secreted. Its function is as follows. Weak insecticidal toxin with probable ion channel impairing activity. In vivo, induces paralysis when injected into sheep blowflies (L.cuprina). Shows weak toxicity, since it is only toxic at high doses, and flies recover within 24 hours. This is U3-hexatoxin-Hi1a from Hadronyche infensa (Fraser island funnel-web spider).